Consider the following 140-residue polypeptide: Large ribosomal subunit protein uL13 (140 aa).

In terms of assembly, part of the 50S ribosomal subunit.

Functionally, this protein is one of the early assembly proteins of the 50S ribosomal subunit, although it is not seen to bind rRNA by itself. It is important during the early stages of 50S assembly. The protein is Large ribosomal subunit protein uL13 of Thermus thermophilus (strain ATCC 27634 / DSM 579 / HB8).